The chain runs to 1537 residues: DNA (cytosine-5)-methyltransferase 1 (1537 aa).

Residues 1–13 (MPARSAPPPPALP) show a composition bias toward pro residues. Disordered regions lie at residues 1–34 (MPAR…SEKE) and 97–232 (RASN…DEKR). Positions 8–105 (PPPALPPALR…SRASNGCAGN (98 aa)) constitute a DMAP1-binding domain. Residues 21-34 (RDLERDEDSLSEKE) are compositionally biased toward basic and acidic residues. Residues 129-154 (SSSSSSSSSSSSSSSSSSSSSLLPAP) show a composition bias toward low complexity. Polar residues predominate over residues 171-194 (SPASSRVTRSSGRQPTILSVFSKG). Positions 182 to 194 (GRQPTILSVFSKG) are interaction with PCNA. The span at 215–227 (KDEEEEEELEEKE) shows a compositional bias: acidic residues. Positions 263, 266, and 329 each coordinate Zn(2+). Residue serine 420 is modified to Phosphoserine. The CXXC-type zinc finger occupies 558–604 (NAMKRRRCGVCEVCQQPECGKCKACQNMVKFGGSGRSKQACLQRRCP). Cysteine 565, cysteine 568, cysteine 571, cysteine 576, cysteine 579, cysteine 582, cysteine 598, and cysteine 603 together coordinate Zn(2+). The segment at 614–638 (DEEVDDNIPEMPSPKKMLQGRKKKQ) is disordered. BAH domains are found at residues 667–791 (ETLE…ETPP) and 883–1011 (HYRK…EDPP). The disordered stretch occupies residues 1006–1050 (SFEDPPNHARSSGNKGKGKGKGKGKGKGKSSTTCEQSEPEPTELK). 7 repeat units span residues 1020–1021 (KG), 1022–1023 (KG), 1024–1025 (KG), 1026–1027 (KG), 1028–1029 (KG), 1030–1031 (KG), and 1032–1033 (KG). The interval 1020–1035 (KGKGKGKGKGKGKGKS) is 8 X 2 AA tandem repeats of K-G. Positions 1021-1033 (GKGKGKGKGKGKG) are enriched in basic residues. The stretch at 1034–1035 (KS) is one 8; approximate repeat. The SAM-dependent MTase C5-type domain maps to 1054–1513 (LRTLDVFSGC…LEIRACVGAR (460 aa)). Residues serine 1061, 1065–1066 (GL), 1083–1084 (EM), 1105–1106 (DC), and cysteine 1106 contribute to the S-adenosyl-L-methionine site. Cysteine 1141 is a catalytic residue. S-adenosyl-L-methionine-binding residues include asparagine 1492 and valine 1494. The segment at 1518-1537 (SGAAVAPPAPEKMEMTAAAD) is disordered.

It belongs to the class I-like SAM-binding methyltransferase superfamily. C5-methyltransferase family. Homodimer. Interacts with PCNA. As to expression, testis and lung.

The protein localises to the nucleus. It catalyses the reaction a 2'-deoxycytidine in DNA + S-adenosyl-L-methionine = a 5-methyl-2'-deoxycytidine in DNA + S-adenosyl-L-homocysteine + H(+). Its function is as follows. Methylates CpG residues. Preferentially methylates hemimethylated DNA. It is responsible for maintaining methylation patterns established in development. Mediates transcriptional repression by direct binding to HDAC2. Plays a role in promoter hypermethylation and transcriptional silencing of tumor suppressor genes (TSGs) or other tumor-related genes. Also required to maintain a transcriptionally repressive state of genes in undifferentiated embryonic stem cells (ESCs). Associates at promoter regions of tumor suppressor genes (TSGs) leading to their gene silencing. This is DNA (cytosine-5)-methyltransferase 1 (DNMT1) from Gallus gallus (Chicken).